The sequence spans 247 residues: Probable transcriptional regulatory protein GM21_0933 (247 aa).

Belongs to the TACO1 family.

Its subcellular location is the cytoplasm. The protein is Probable transcriptional regulatory protein GM21_0933 of Geobacter sp. (strain M21).